Here is a 39-residue protein sequence, read N- to C-terminus: Photosystem II reaction center protein L (39 aa).

Residues 18–38 (SLYLGLLFVFVTGVLMSSYFF) traverse the membrane as a helical segment.

Belongs to the PsbL family. In terms of assembly, PSII is composed of 1 copy each of membrane proteins PsbA, PsbB, PsbC, PsbD, PsbE, PsbF, PsbH, PsbI, PsbJ, PsbK, PsbL, PsbM, PsbT, PsbX, PsbY, PsbZ, Psb30/Ycf12, peripheral proteins PsbO, CyanoQ (PsbQ), PsbU, PsbV and a large number of cofactors. It forms dimeric complexes.

Its subcellular location is the cellular thylakoid membrane. In terms of biological role, one of the components of the core complex of photosystem II (PSII). PSII is a light-driven water:plastoquinone oxidoreductase that uses light energy to abstract electrons from H(2)O, generating O(2) and a proton gradient subsequently used for ATP formation. It consists of a core antenna complex that captures photons, and an electron transfer chain that converts photonic excitation into a charge separation. This subunit is found at the monomer-monomer interface and is required for correct PSII assembly and/or dimerization. In Synechococcus sp. (strain CC9902), this protein is Photosystem II reaction center protein L.